We begin with the raw amino-acid sequence, 1017 residues long: GPI ethanolamine phosphate transferase 3 (1017 aa).

A helical membrane pass occupies residues 34 to 54 (FYIILLVFIAILQFISIAFFT). N-linked (GlcNAc...) asparagine glycans are attached at residues N66, N71, N100, N182, and N203. Residues 347–367 (VSSLALLMGQPIPFNNLGWPI) form a helical membrane-spanning segment. N411 carries N-linked (GlcNAc...) asparagine glycosylation. 6 helical membrane-spanning segments follow: residues 457-477 (LLATSLVLLISITKLIPSIVV), 484-504 (FVPGIIIMVLVTNLCFHGIFY), 515-535 (FWGTLLATAIGIIIGCYITIF), 558-578 (IAVMFMIIHALLFTSNSFTIW), 582-602 (IVAFLLSTFGMLTLYEFVFLP), and 644-664 (LGGYHSAVLIIFTRLASMITI). Residues N681 and N682 are each glycosylated (N-linked (GlcNAc...) asparagine). The chain crosses the membrane as a helical span at residues 685–705 (WWVLGLCFLMIFILPACITGY). The N-linked (GlcNAc...) asparagine glycan is linked to N707. The helical transmembrane segment at 715 to 735 (AAPIWINVFLKGILGLNFVYW) threads the bilayer. N-linked (GlcNAc...) asparagine glycosylation is present at N742. Helical transmembrane passes span 765 to 785 (IIAGFSLIASNVGWLMGPLCI), 806 to 826 (NIYGSEFFLLVINVLISILLF), 829 to 849 (PLAQLSYFLMCNQLLSILEII), 903 to 923 (IAIILNTFGPHILVSLSVALL), 947 to 967 (GILLTYNTILCLSSFIWVTHF), and 981 to 1001 (FIFASLSLIVTQLVVTFGTIA).

It belongs to the PIGG/PIGN/PIGO family. PIGO subfamily. Post-translationally, glycosylated.

It is found in the endoplasmic reticulum membrane. It functions in the pathway glycolipid biosynthesis; glycosylphosphatidylinositol-anchor biosynthesis. Involved in glycosylphosphatidylinositol-anchor biosynthesis. Transfers ethanolamine phosphate to the GPI third mannose which links the GPI-anchor to the C-terminus of the proteins by an amide bond. Involved in cell wall biosynthesis. This is GPI ethanolamine phosphate transferase 3 (GPI13) from Saccharomyces cerevisiae (strain ATCC 204508 / S288c) (Baker's yeast).